A 705-amino-acid chain; its full sequence is uncharacterized protein (705 aa).

The segment at residues 24-52 (CHFCRVRKLKCDRVRPFCGSCSSRNRKQC) is a DNA-binding region (zn(2)-C6 fungal-type).

Its subcellular location is the nucleus. This is an uncharacterized protein from Saccharomyces cerevisiae (strain ATCC 204508 / S288c) (Baker's yeast).